We begin with the raw amino-acid sequence, 161 residues long: 6,7-dimethyl-8-ribityllumazine synthase (161 aa).

5-amino-6-(D-ribitylamino)uracil contacts are provided by residues Trp31, Ser63–Glu65, and Val85–Ile87. Residue Gly90–Thr91 coordinates (2S)-2-hydroxy-3-oxobutyl phosphate. The active-site Proton donor is His93. Phe118 contacts 5-amino-6-(D-ribitylamino)uracil. Arg132 is a binding site for (2S)-2-hydroxy-3-oxobutyl phosphate.

This sequence belongs to the DMRL synthase family.

The catalysed reaction is (2S)-2-hydroxy-3-oxobutyl phosphate + 5-amino-6-(D-ribitylamino)uracil = 6,7-dimethyl-8-(1-D-ribityl)lumazine + phosphate + 2 H2O + H(+). Its pathway is cofactor biosynthesis; riboflavin biosynthesis; riboflavin from 2-hydroxy-3-oxobutyl phosphate and 5-amino-6-(D-ribitylamino)uracil: step 1/2. Its function is as follows. Catalyzes the formation of 6,7-dimethyl-8-ribityllumazine by condensation of 5-amino-6-(D-ribitylamino)uracil with 3,4-dihydroxy-2-butanone 4-phosphate. This is the penultimate step in the biosynthesis of riboflavin. The protein is 6,7-dimethyl-8-ribityllumazine synthase of Pseudarthrobacter chlorophenolicus (strain ATCC 700700 / DSM 12829 / CIP 107037 / JCM 12360 / KCTC 9906 / NCIMB 13794 / A6) (Arthrobacter chlorophenolicus).